We begin with the raw amino-acid sequence, 475 residues long: Sulfate adenylyltransferase subunit 1 (475 aa).

One can recognise a tr-type G domain in the interval 25-239 (KSLLRFLTCG…EVLETVEIQR (215 aa)). A G1 region spans residues 34 to 41 (GSVDDGKS). 34 to 41 (GSVDDGKS) contributes to the GTP binding site. A G2 region spans residues 92–96 (GITID). Positions 113–116 (DTPG) are G3. GTP is bound by residues 113-117 (DTPGH) and 168-171 (NKMD). The interval 168–171 (NKMD) is G4. A G5 region spans residues 206 to 208 (SAL).

Belongs to the TRAFAC class translation factor GTPase superfamily. Classic translation factor GTPase family. CysN/NodQ subfamily. In terms of assembly, heterodimer composed of CysD, the smaller subunit, and CysN.

The enzyme catalyses sulfate + ATP + H(+) = adenosine 5'-phosphosulfate + diphosphate. The protein operates within sulfur metabolism; hydrogen sulfide biosynthesis; sulfite from sulfate: step 1/3. Functionally, with CysD forms the ATP sulfurylase (ATPS) that catalyzes the adenylation of sulfate producing adenosine 5'-phosphosulfate (APS) and diphosphate, the first enzymatic step in sulfur assimilation pathway. APS synthesis involves the formation of a high-energy phosphoric-sulfuric acid anhydride bond driven by GTP hydrolysis by CysN coupled to ATP hydrolysis by CysD. This chain is Sulfate adenylyltransferase subunit 1, found in Shigella dysenteriae serotype 1 (strain Sd197).